We begin with the raw amino-acid sequence, 454 residues long: Mitochondrial dynamics protein MID49 (454 aa).

Topologically, residues 1 to 22 are mitochondrial intermembrane; it reads MAEFSQKQRKQSGSEGLGSVVD. Residues 23–43 traverse the membrane as a helical segment; sequence FLLANARLVLGVGGAAVLGIA. Topologically, residues 44 to 454 are cytoplasmic; that stretch reads TLAVKRLIDR…SGLQVPESLF (411 aa). Residues 76-113 are disordered; sequence ATSPQKPQPPPAAFSQPLATGSPSPSVPVEPTPIHSPT.

Belongs to the MID49/MID51 family. In terms of assembly, interacts with DNM1L.

The protein localises to the mitochondrion outer membrane. Functionally, mitochondrial outer membrane protein which regulates mitochondrial organization. It is required for mitochondrial fission and promotes the recruitment and association of the fission mediator dynamin-related protein 1 (DNM1L) to the mitochondrial surface independently of the mitochondrial fission FIS1 and MFF proteins. Regulates DNM1L GTPase activity. The sequence is that of Mitochondrial dynamics protein MID49 (Mief2) from Mus musculus (Mouse).